Consider the following 521-residue polypeptide: NAD(P)H-quinone oxidoreductase subunit 2 (521 aa).

Transmembrane regions (helical) follow at residues 14 to 34 (VILP…TDLI), 42 to 62 (LTPA…TLQW), 79 to 99 (LSIV…LLSI), 109 to 129 (LGEF…LSGA), 132 to 152 (LVTI…LTGY), 167 to 187 (LLIG…LYGL), 207 to 227 (LALL…ISAV), 241 to 261 (PTPI…ALAI), 275 to 295 (WHFV…VVAL), 303 to 323 (LLAY…IAGT), 331 to 351 (VYYL…VILF), 375 to 395 (LGLS…GFFG), 397 to 417 (LYLF…LALI), and 463 to 483 (AGLV…NPLF).

Belongs to the complex I subunit 2 family. In terms of assembly, NDH-1 can be composed of about 15 different subunits; different subcomplexes with different compositions have been identified which probably have different functions.

The protein localises to the cellular thylakoid membrane. The catalysed reaction is a plastoquinone + NADH + (n+1) H(+)(in) = a plastoquinol + NAD(+) + n H(+)(out). The enzyme catalyses a plastoquinone + NADPH + (n+1) H(+)(in) = a plastoquinol + NADP(+) + n H(+)(out). Its function is as follows. NDH-1 shuttles electrons from an unknown electron donor, via FMN and iron-sulfur (Fe-S) centers, to quinones in the respiratory and/or the photosynthetic chain. The immediate electron acceptor for the enzyme in this species is believed to be plastoquinone. Couples the redox reaction to proton translocation, and thus conserves the redox energy in a proton gradient. Cyanobacterial NDH-1 also plays a role in inorganic carbon-concentration. This Synechococcus elongatus (strain ATCC 33912 / PCC 7942 / FACHB-805) (Anacystis nidulans R2) protein is NAD(P)H-quinone oxidoreductase subunit 2.